The sequence spans 180 residues: UPF0340 protein llmg_0465 (180 aa).

The protein belongs to the UPF0340 family.

The chain is UPF0340 protein llmg_0465 from Lactococcus lactis subsp. cremoris (strain MG1363).